The chain runs to 86 residues: MANSLRGEVLTLYKNLLYLGRDYPKGADYFKRRLKNVFLKNKDVEDPEKIKELIARGEFVMKELEALYFLRKYRAMKQRYYSDTKV.

The protein belongs to the complex I LYR family. Homotetramer. Interacts with NDUFAB1. Interacts with ETFA. Interacts with ETFB.

The protein localises to the mitochondrion. Functionally, acts as a regulator of the electron transfer flavoprotein by promoting the removal of flavin from the ETF holoenzyme (composed of ETFA and ETFB). The protein is Electron transfer flavoprotein regulatory factor 1 of Mus musculus (Mouse).